The chain runs to 286 residues: uncharacterized protein (286 aa).

This is an uncharacterized protein from Acidianus sp. F28 (AFV-2).